Here is an 85-residue protein sequence, read N- to C-terminus: Large ribosomal subunit protein bL27 (85 aa).

Residues 1 to 22 (MAHKKGQGSSRNGRDSPGQHRG) form a disordered region.

This sequence belongs to the bacterial ribosomal protein bL27 family.

This chain is Large ribosomal subunit protein bL27, found in Anaeromyxobacter sp. (strain Fw109-5).